The sequence spans 339 residues: DNA-directed RNA polymerase subunit alpha (339 aa).

The interval 1-234 (MIEKNWQELI…DQFQIFINFE (234 aa)) is alpha N-terminal domain (alpha-NTD). Residues 251–339 (FNPALLRKVD…DLAKRFEDHV (89 aa)) form an alpha C-terminal domain (alpha-CTD) region.

Belongs to the RNA polymerase alpha chain family. As to quaternary structure, homodimer. The RNAP catalytic core consists of 2 alpha, 1 beta, 1 beta' and 1 omega subunit. When a sigma factor is associated with the core the holoenzyme is formed, which can initiate transcription.

The enzyme catalyses RNA(n) + a ribonucleoside 5'-triphosphate = RNA(n+1) + diphosphate. Its function is as follows. DNA-dependent RNA polymerase catalyzes the transcription of DNA into RNA using the four ribonucleoside triphosphates as substrates. The polypeptide is DNA-directed RNA polymerase subunit alpha (Maricaulis maris (strain MCS10) (Caulobacter maris)).